Reading from the N-terminus, the 475-residue chain is Lactate utilization protein B (475 aa).

2 4Fe-4S ferredoxin-type domains span residues 304 to 334 (GTEF…GHSY) and 353 to 382 (YEDH…LHEL). [4Fe-4S] cluster-binding residues include cysteine 313, cysteine 316, cysteine 319, cysteine 323, cysteine 366, cysteine 369, and cysteine 373.

Belongs to the LutB/YkgF family.

Functionally, is involved in L-lactate degradation and allows cells to grow with lactate as the sole carbon source. Has probably a role as an electron transporter during oxidation of L-lactate. This is Lactate utilization protein B from Shouchella clausii (strain KSM-K16) (Alkalihalobacillus clausii).